The sequence spans 495 residues: ATP synthase subunit beta, chloroplastic (495 aa).

172 to 179 (GGAGVGKT) serves as a coordination point for ATP.

Belongs to the ATPase alpha/beta chains family. As to quaternary structure, F-type ATPases have 2 components, CF(1) - the catalytic core - and CF(0) - the membrane proton channel. CF(1) has five subunits: alpha(3), beta(3), gamma(1), delta(1), epsilon(1). CF(0) has four main subunits: a(1), b(1), b'(1) and c(9-12).

Its subcellular location is the plastid. The protein resides in the chloroplast thylakoid membrane. It catalyses the reaction ATP + H2O + 4 H(+)(in) = ADP + phosphate + 5 H(+)(out). Functionally, produces ATP from ADP in the presence of a proton gradient across the membrane. The catalytic sites are hosted primarily by the beta subunits. The sequence is that of ATP synthase subunit beta, chloroplastic from Hyacinthus orientalis (Common hyacinth).